Reading from the N-terminus, the 93-residue chain is Large ribosomal subunit protein uL23cz/uL23cy (93 aa).

It belongs to the universal ribosomal protein uL23 family. In terms of assembly, part of the 50S ribosomal subunit.

It localises to the plastid. The protein resides in the chloroplast. In terms of biological role, binds to 23S rRNA. The sequence is that of Large ribosomal subunit protein uL23cz/uL23cy (rpl23-A) from Lactuca sativa (Garden lettuce).